A 526-amino-acid polypeptide reads, in one-letter code: 4-alpha-glucanotransferase (526 aa).

It belongs to the disproportionating enzyme family.

Its subcellular location is the cytoplasm. It catalyses the reaction Transfers a segment of a (1-&gt;4)-alpha-D-glucan to a new position in an acceptor, which may be glucose or a (1-&gt;4)-alpha-D-glucan.. The chain is 4-alpha-glucanotransferase (malQ) from Chlamydia pneumoniae (Chlamydophila pneumoniae).